Reading from the N-terminus, the 305-residue chain is MTNQYSILFKQEQAHDDAIWSVAWETNKKENIETVVTGSLDDLVKVWKWRDERLELQWSLEGHQLGVVSVDISHTLPIAASSSLDAHIRLWDLENGKQMKSIDAGPVDAWTLAFSPDSQYLATGTHMGKVNIFGVESGKKEYSLDTRGKFILSIAYSPDGKYLASGAIDGIINIFDIATGKLLHTLEGHAMPIRSLTFSPDSQLLVTASDDGYIKIYDVQHANLAGTLSGHASWVLNVAFCPDDTHFVSSSSDKSVKVWDVGTRTCIHTFFDHQDQVWGVKYNGNGSKIVSVGDDQEIHVYDCPI.

M1 is modified (N-acetylmethionine). N-acetylthreonine; in WD repeat-containing protein 61, N-terminally processed is present on T2. 7 WD repeats span residues 14-57 (AHDD…LELQ), 62-101 (GHQL…QMKS), 104-143 (AGPV…KEYS), 146-187 (TRGK…HTLE), 188-227 (GHAM…LAGT), 230-269 (GHAS…CIHT), and 272-305 (DHQD…DCPI).

Belongs to the SKI8 family. As to quaternary structure, component of the PAF1 complex, which consists of CDC73, PAF1, LEO1, CTR9, RTF1 and SKIC8. The PAF1 complex interacts with PHF5A. Within the PAF1 complex interacts directly with PHF5A. Component of the SKI complex which consists of SKIC2, SKIC3 and SKIC8.

The protein resides in the nucleus. The protein localises to the cytoplasm. Functionally, component of the PAF1 complex (PAF1C) which has multiple functions during transcription by RNA polymerase II and is implicated in regulation of development and maintenance of embryonic stem cell pluripotency. PAF1C associates with RNA polymerase II through interaction with POLR2A CTD non-phosphorylated and 'Ser-2'- and 'Ser-5'-phosphorylated forms and is involved in transcriptional elongation, acting both independently and synergistically with TCEA1 and in cooperation with the DSIF complex and HTATSF1. PAF1C is required for transcription of Hox and Wnt target genes. PAF1C is involved in hematopoiesis and stimulates transcriptional activity of KMT2A/MLL1; it promotes leukemogenesis through association with KMT2A/MLL1-rearranged oncoproteins, such as KMT2A/MLL1-MLLT3/AF9 and KMT2A/MLL1-MLLT1/ENL. PAF1C is involved in histone modifications such as ubiquitination of histone H2B and methylation on histone H3 'Lys-4' (H3K4me3). PAF1C recruits the RNF20/40 E3 ubiquitin-protein ligase complex and the E2 enzyme UBE2A or UBE2B to chromatin which mediate monoubiquitination of 'Lys-120' of histone H2B (H2BK120ub1); UB2A/B-mediated H2B ubiquitination is proposed to be coupled to transcription. PAF1C is involved in mRNA 3' end formation probably through association with cleavage and poly(A) factors. In case of infection by influenza A strain H3N2, PAF1C associates with viral NS1 protein, thereby regulating gene transcription. Required for mono- and trimethylation on histone H3 'Lys-4' (H3K4me3), dimethylation on histone H3 'Lys-79' (H3K4me3). Required for Hox gene transcription. Also acts as a component of the SKI complex, a multiprotein complex that assists the RNA-degrading exosome during the mRNA decay and quality-control pathways. The SKI complex catalyzes mRNA extraction from 80S ribosomal complexes in the 3'-5' direction and channels mRNA to the cytosolic exosome for degradation. SKI-mediated extraction of mRNA from stalled ribosomes allow binding of the Pelota-HBS1L complex and subsequent ribosome disassembly by ABCE1 for ribosome recycling. The protein is Superkiller complex protein 8 (Skic8) of Mus musculus (Mouse).